The sequence spans 162 residues: MSQSANRLCRIDIDDSALPPPSPEIEQDRRVAVFDLLEDNSFTLPGREGQDVPPGPYALALAVREKRLVFDIATESGSKVAEFHLSLGPFRQTVKDYFQICTSYFDAVKRLPPAQIEAIDMARRGIHNEGARTLQERLEGKAEVDIDTARRLFTLICALVPG.

A disordered region spans residues M1–S22.

Belongs to the UPF0262 family.

In Paracoccus denitrificans (strain Pd 1222), this protein is UPF0262 protein Pden_1958.